Consider the following 337-residue polypeptide: MTLQIGVIGCGAIGQDHIRRLTRTLSGARVVAVNDIDPQQARDAVTKYGLDAEIYGDGHEVVAAADVQAVLVTSWGPTHEAFVLDAIAHGKPVFCEKPLAVTAEGCMRIVEAEVAHGKRLVQVGFMRPYDEGYRALKRVIDSGEIGAPLMLHCAHRNQSVGERYTTDMAITDTLIHELDVLRWLLGEDYVSTQVVYPKKTRHASSHLADPQIVLLETASGVRIDVEIFVNCQYGYDIQCEVVGEQGIAKLPDPPAVGLKHGARQSVEIMTDWKERFIASYDVELQAFIDGVRAHALTGPSAWDGYAAAVAADACVRAQKSGAVEPIAMAERPAFYRG.

Belongs to the Gfo/Idh/MocA family. Homotetramer.

The enzyme catalyses myo-inositol + NAD(+) = scyllo-inosose + NADH + H(+). Its function is as follows. Involved in the oxidation of myo-inositol (MI) to 2-keto-myo-inositol (2KMI or 2-inosose). In Burkholderia lata (strain ATCC 17760 / DSM 23089 / LMG 22485 / NCIMB 9086 / R18194 / 383), this protein is Inositol 2-dehydrogenase.